Reading from the N-terminus, the 798-residue chain is Serine/threonine-protein kinase SIK2 (798 aa).

The 252-residue stretch at 26 to 277 (YDIERTLGKG…ISQIKQHKWM (252 aa)) folds into the Protein kinase domain. ATP contacts are provided by residues 32–40 (LGKGNFAVV) and K55. D148 serves as the catalytic Proton acceptor. T181 is modified (phosphothreonine). Residue S185 is modified to Phosphoserine. A UBA domain is found at 302-342 (DYNEQVLGIMQTLGIDRQRTVESLQNSSYNHFAAIYYLLLE). Residues 351–361 (QLSSRPATGRQ) show a composition bias toward polar residues. The segment at 351–382 (QLSSRPATGRQQRPRSSEISNAEMPQDSLTSE) is disordered. S575 bears the Phosphoserine mark. The interval 672 to 691 (ACPQTSQTSATNGLPPSDSA) is disordered. The segment covering 673–685 (CPQTSQTSATNGL) has biased composition (polar residues).

The protein belongs to the protein kinase superfamily. CAMK Ser/Thr protein kinase family. SNF1 subfamily. The cofactor is Mg(2+). Post-translationally, phosphorylated at Thr-181 by STK11/LKB1 in complex with STE20-related adapter-alpha (STRADA) pseudo kinase and CAB39. As to expression, ubiquitously expressed in embryonic tissue.

It localises to the cytoplasm. It carries out the reaction L-seryl-[protein] + ATP = O-phospho-L-seryl-[protein] + ADP + H(+). It catalyses the reaction L-threonyl-[protein] + ATP = O-phospho-L-threonyl-[protein] + ADP + H(+). Its activity is regulated as follows. Activated by phosphorylation on Thr-181. Functionally, phosphorylates IRS1 in insulin-stimulated adipocytes, potentially modulating the efficiency of insulin signal transduction. Inhibits CREB activity by phosphorylating and repressing the CREB-specific coactivators, CRTC1-3. This is Serine/threonine-protein kinase SIK2 (SIK2) from Gallus gallus (Chicken).